The chain runs to 871 residues: Phosphoinositide 3-kinase regulatory subunit 5 (871 aa).

Met1 carries the N-acetylmethionine modification. The interval 25 to 101 (SLGRRSAPWS…TPHFPPDSDL (77 aa)) is heterodimerization. Residues 381 to 413 (MDSGYVEDSEENSEWPQKPGSQKRQGHRRPGQK) form a disordered region. A phosphoserine mark is found at Ser451 and Ser500. The segment at 646 to 746 (PILADMLLYY…WSNLEKVCTS (101 aa)) is interaction with beta-gamma G protein dimers.

In terms of assembly, heterodimer of a catalytic subunit (PIK3CG/p120) and a regulatory (PIK3R5a/p101) subunit. Interacts with beta-gamma G protein dimers.

The protein localises to the nucleus. It is found in the cytoplasm. Its subcellular location is the cell membrane. Greatly activated by G gamma proteins. Its function is as follows. Regulatory subunit of the PI3K gamma complex. Required for recruitment of the catalytic subunit to the plasma membrane via interaction with beta-gamma G protein dimers. Required for G protein-mediated activation of PIK3CG. The sequence is that of Phosphoinositide 3-kinase regulatory subunit 5 (Pik3r5) from Mus musculus (Mouse).